The sequence spans 311 residues: MANPLYQKHIISINDLSRDDLNLVLATAAKLKANPQPELLKHKVIASCFFEASTRTRLSFETSMHRLGASVVGFSDSANTSLGKKGETLADTISVISTYVDAIVMRHPQEGAARLATEFSGNVPVLNAGDGANQHPTQTLLDLFTIQETQGRLDNLNIAMVGDLKYGRTVHSLTQALAKFDGNRFYFIAPDALAMPQYILDMLDEKGIAWSLHSAIEEVMAEVDILYMTRVQKERLDPSEYANVKAQFVLRASDLNGARENMKVLHPLPRIDEITTDVDKTPHAWYFQQAGNGIFARQALLALVLNSDLAL.

The carbamoyl phosphate site is built by Arg-55 and Thr-56. Residue Lys-85 coordinates L-aspartate. Positions 106, 135, and 138 each coordinate carbamoyl phosphate. L-aspartate-binding residues include Arg-168 and Arg-230. Positions 268 and 269 each coordinate carbamoyl phosphate.

Belongs to the aspartate/ornithine carbamoyltransferase superfamily. ATCase family. In terms of assembly, heterododecamer (2C3:3R2) of six catalytic PyrB chains organized as two trimers (C3), and six regulatory PyrI chains organized as three dimers (R2).

It catalyses the reaction carbamoyl phosphate + L-aspartate = N-carbamoyl-L-aspartate + phosphate + H(+). The protein operates within pyrimidine metabolism; UMP biosynthesis via de novo pathway; (S)-dihydroorotate from bicarbonate: step 2/3. Its function is as follows. Catalyzes the condensation of carbamoyl phosphate and aspartate to form carbamoyl aspartate and inorganic phosphate, the committed step in the de novo pyrimidine nucleotide biosynthesis pathway. This Citrobacter koseri (strain ATCC BAA-895 / CDC 4225-83 / SGSC4696) protein is Aspartate carbamoyltransferase catalytic subunit.